The chain runs to 476 residues: Cytosolic Fe-S cluster assembly factor narfl (476 aa).

8 residues coordinate [4Fe-4S] cluster: Cys24, Cys71, Cys74, Cys77, Cys190, Cys246, Cys395, and Cys399.

The protein belongs to the NARF family. Component of the CIA complex.

Functionally, component of the cytosolic iron-sulfur protein assembly (CIA) complex, a multiprotein complex that mediates the incorporation of iron-sulfur cluster into extramitochondrial Fe/S proteins. In Xenopus tropicalis (Western clawed frog), this protein is Cytosolic Fe-S cluster assembly factor narfl (narfl).